A 131-amino-acid polypeptide reads, in one-letter code: Small ribosomal subunit protein uS8 (131 aa).

It belongs to the universal ribosomal protein uS8 family. As to quaternary structure, part of the 30S ribosomal subunit. Contacts proteins S5 and S12.

One of the primary rRNA binding proteins, it binds directly to 16S rRNA central domain where it helps coordinate assembly of the platform of the 30S subunit. This is Small ribosomal subunit protein uS8 from Acidithiobacillus ferrooxidans (strain ATCC 23270 / DSM 14882 / CIP 104768 / NCIMB 8455) (Ferrobacillus ferrooxidans (strain ATCC 23270)).